The chain runs to 422 residues: Inner membrane ALBINO3-like protein 2, chloroplastic (422 aa).

Positions 1–10 (MALQMKQSPS) are enriched in polar residues. Residues 1 to 22 (MALQMKQSPSMGVRRASQPVLP) form a disordered region. The chain crosses the membrane as a helical span at residues 65-85 (LYTLAEGGPIDVLAQFFEFVL). Residues 86–96 (QTLDEGLESAK) are Stromal-facing. A helical transmembrane segment spans residues 97-117 (IPYSYGFAIIALTVLVKVATF). At 118–166 (PLTQKQVESTLSLQALQPRVKELQAKYADDPENLQLETARLYKEAGVNP) the chain is on the lumenal side. Residues 167–187 (LAGCFPTLATIPVFIGLYNAL) form a helical membrane-spanning segment. Topologically, residues 188-225 (SNAAKEGLLTEGFFWIPSLGGPTTIGGGLEWLVPFENG) are stromal. The chain crosses the membrane as a helical span at residues 226–246 (APPVGWANAAAYLVMPVLLVA). Over 247–275 (SQYASQKIISSQNNQDPSQQQAQAILKFL) the chain is Lumenal. Residues 276 to 296 (PLMIGWFSLNVPSGLTLYWFV) form a helical membrane-spanning segment. Topologically, residues 297–422 (NNLLSTGQQL…GSEEGKDNSA (126 aa)) are stromal. The tract at residues 325–422 (TAGSSTPIVK…GSEEGKDNSA (98 aa)) is disordered. Residues 334–350 (KPKEERVKKVTGKELGS) are compositionally biased toward basic and acidic residues. Residues 358–367 (DGEEVEDVEV) show a composition bias toward acidic residues. Residues 368–380 (EVVSSGSSSSSGS) are compositionally biased toward low complexity. Basic and acidic residues predominate over residues 386-400 (RKGEKFRALKAREAA).

Belongs to the OXA1/ALB3/YidC (TC 2.A.9.2) family.

The protein localises to the plastid. Its subcellular location is the chloroplast thylakoid membrane. Functionally, required for the insertion of some light-harvesting complexes (LHC) proteins into the chloroplast thylakoid membrane. Essential for the assembly and activity of LHC I and II. Its function is probably partly distinct from that of ALB3.1. This chain is Inner membrane ALBINO3-like protein 2, chloroplastic (ALB3.2), found in Chlamydomonas reinhardtii (Chlamydomonas smithii).